Reading from the N-terminus, the 1108-residue chain is Folliculin-interacting protein 2 (1108 aa).

Residues 38-456 (FGLSDIRLLV…TVMPVDHPPI (419 aa)) enclose the uDENN FNIP1/2-type domain. Disordered regions lie at residues 89–112 (QESSSSSGSSSSGSSSSHGFGGSL), 209–233 (RTGSNLAHSTPVDMPSRGQNEDRDS), 598–635 (SEGVNTSELGHKPEKNRCKRPEQNSEASSMGFQEAEPD), and 649–671 (QNDQEATQDCSSSPPSCEVPRVR). Over residues 91–106 (SSSSSGSSSSGSSSSH) the composition is skewed to low complexity. Phosphoserine is present on residues serine 212 and serine 217. A cDENN FNIP1/2-type domain is found at 464 to 1034 (TSQSVNMLAK…VSSLLQSILQ (571 aa)). The interaction with PRKAA1 stretch occupies residues 540-905 (DDQVINGSKI…DEACVLALLE (366 aa)). Residues 606–620 (LGHKPEKNRCKRPEQ) are compositionally biased toward basic and acidic residues. Residues 652–663 (QEATQDCSSSPP) show a composition bias toward polar residues. 3 positions are modified to phosphoserine: serine 720, serine 721, and serine 723. Residues 1044-1099 (FCIMHLEDRLQEMYLKSKMLSEYLRGHTRVHVKELSVVLGIESNDLPLLTAIASTH) enclose the dDENN FNIP1/2-type domain.

Belongs to the FNIP family. Homodimer and homomultimer. Heterodimer and heteromultimer with FNIP1. Interacts (via C-terminus) with FLCN (via C-terminus). Phosphorylated FLCN is preferentially bound. Component of the lysosomal folliculin complex (LFC), composed of FLCN, FNIP1 (or FNIP2), RagA/RRAGA or RagB/RRAGB GDP-bound, RagC/RRAGC or RagD/RRAGD GTP-bound, and Ragulator. Interacts with PRKAA1, PRKAB1 and PRKAG1 subunits of 5'-AMP-activated protein kinase. Interacts with HSP70, HSP90AA1, STIP1, PTGES3, CDC37, BRAF, GCR and CDK4. Phosphorylated by AMPK.

It is found in the lysosome membrane. The protein resides in the cytoplasm. Functionally, binding partner of the GTPase-activating protein FLCN: involved in the cellular response to amino acid availability by regulating the non-canonical mTORC1 signaling cascade controlling the MiT/TFE factors TFEB and TFE3. Required to promote FLCN recruitment to lysosomes and interaction with Rag GTPases, leading to activation of the non-canonical mTORC1 signaling. In low-amino acid conditions, component of the lysosomal folliculin complex (LFC) on the membrane of lysosomes, which inhibits the GTPase-activating activity of FLCN, thereby inactivating mTORC1 and promoting nuclear translocation of TFEB and TFE3. Upon amino acid restimulation, disassembly of the LFC complex liberates the GTPase-activating activity of FLCN, leading to activation of mTORC1 and subsequent inactivation of TFEB and TFE3. Together with FLCN, regulates autophagy: following phosphorylation by ULK1, interacts with GABARAP and promotes autophagy. In addition to its role in mTORC1 signaling, also acts as a co-chaperone of HSP90AA1/Hsp90: inhibits the ATPase activity of HSP90AA1/Hsp90, leading to activate both kinase and non-kinase client proteins of HSP90AA1/Hsp90. Acts as a scaffold to load client protein FLCN onto HSP90AA1/Hsp90. Competes with the activating co-chaperone AHSA1 for binding to HSP90AA1, thereby providing a reciprocal regulatory mechanism for chaperoning of client proteins. May play a role in the signal transduction pathway of apoptosis induced by O6-methylguanine-mispaired lesions. This is Folliculin-interacting protein 2 from Mus musculus (Mouse).